The sequence spans 400 residues: Phosphoglycerate kinase (400 aa).

Substrate is bound by residues 24–26 (DFN), R39, 62–65 (HFGR), R121, and R154. Residues K205, G296, E327, and 356-359 (GGDS) each bind ATP.

The protein belongs to the phosphoglycerate kinase family. Monomer.

The protein localises to the cytoplasm. The catalysed reaction is (2R)-3-phosphoglycerate + ATP = (2R)-3-phospho-glyceroyl phosphate + ADP. The protein operates within carbohydrate degradation; glycolysis; pyruvate from D-glyceraldehyde 3-phosphate: step 2/5. The chain is Phosphoglycerate kinase from Rippkaea orientalis (strain PCC 8801 / RF-1) (Cyanothece sp. (strain PCC 8801)).